The following is an 81-amino-acid chain: Saposin-C (81 aa).

The Saposin B-type domain maps to 1–81; the sequence is ESVTCKACEY…CSELGLCMSG (81 aa). 3 cysteine pairs are disulfide-bonded: C5–C78, C8–C72, and C36–C47. The N-linked (GlcNAc...) asparagine glycan is linked to N22.

In terms of biological role, saposin-A and saposin-C stimulate the hydrolysis of glucosylceramide by beta-glucosylceramidase (EC 3.2.1.45) and galactosylceramide by beta-galactosylceramidase (EC 3.2.1.46). Saposin-C apparently acts by combining with the enzyme and acidic lipid to form an activated complex, rather than by solubilizing the substrate. This chain is Saposin-C (PSAP), found in Cavia porcellus (Guinea pig).